A 429-amino-acid polypeptide reads, in one-letter code: Serine--tRNA ligase (429 aa).

235 to 237 lines the L-serine pocket; that stretch reads TAE. 266–268 contributes to the ATP binding site; that stretch reads RSE. Glutamate 289 is an L-serine binding site. ATP is bound at residue 353 to 356; that stretch reads EISS. L-serine is bound at residue serine 389.

It belongs to the class-II aminoacyl-tRNA synthetase family. Type-1 seryl-tRNA synthetase subfamily. Homodimer. The tRNA molecule binds across the dimer.

The protein localises to the cytoplasm. It carries out the reaction tRNA(Ser) + L-serine + ATP = L-seryl-tRNA(Ser) + AMP + diphosphate + H(+). It catalyses the reaction tRNA(Sec) + L-serine + ATP = L-seryl-tRNA(Sec) + AMP + diphosphate + H(+). It participates in aminoacyl-tRNA biosynthesis; selenocysteinyl-tRNA(Sec) biosynthesis; L-seryl-tRNA(Sec) from L-serine and tRNA(Sec): step 1/1. Its function is as follows. Catalyzes the attachment of serine to tRNA(Ser). Is also able to aminoacylate tRNA(Sec) with serine, to form the misacylated tRNA L-seryl-tRNA(Sec), which will be further converted into selenocysteinyl-tRNA(Sec). This Actinobacillus succinogenes (strain ATCC 55618 / DSM 22257 / CCUG 43843 / 130Z) protein is Serine--tRNA ligase.